Reading from the N-terminus, the 300-residue chain is Acetyl-coenzyme A carboxylase carboxyl transferase subunit beta (300 aa).

The CoA carboxyltransferase N-terminal domain maps to 24-293 (LWTNCESCSQ…NAPGAALGGA (270 aa)). Residues C28, C31, C47, and C50 each contribute to the Zn(2+) site. The C4-type zinc-finger motif lies at 28 to 50 (CESCSQMILVKDLQKAMNVCPHC).

It belongs to the AccD/PCCB family. As to quaternary structure, acetyl-CoA carboxylase is a heterohexamer composed of biotin carboxyl carrier protein (AccB), biotin carboxylase (AccC) and two subunits each of ACCase subunit alpha (AccA) and ACCase subunit beta (AccD). Zn(2+) is required as a cofactor.

The protein resides in the cytoplasm. The enzyme catalyses N(6)-carboxybiotinyl-L-lysyl-[protein] + acetyl-CoA = N(6)-biotinyl-L-lysyl-[protein] + malonyl-CoA. Its pathway is lipid metabolism; malonyl-CoA biosynthesis; malonyl-CoA from acetyl-CoA: step 1/1. Its function is as follows. Component of the acetyl coenzyme A carboxylase (ACC) complex. Biotin carboxylase (BC) catalyzes the carboxylation of biotin on its carrier protein (BCCP) and then the CO(2) group is transferred by the transcarboxylase to acetyl-CoA to form malonyl-CoA. This chain is Acetyl-coenzyme A carboxylase carboxyl transferase subunit beta, found in Gluconacetobacter diazotrophicus (strain ATCC 49037 / DSM 5601 / CCUG 37298 / CIP 103539 / LMG 7603 / PAl5).